The following is a 445-amino-acid chain: MAERNEQILTPSQLNALARDLLEGSFPLVWVEAELSSVTRPSSGHLYFTLKDARAQIRCAMFKPKSTWLKFQPREGLRVLARGRLTLYEARGDYQLVLDHMEEAGEGALRRAFDALRARLAAEGLFDAERKQSLPAHVQRLAVITSPSGAAVRDVLSVLARRFPLLEVDLLPSLVQGDSAAAQITSLLQRADASGRYDVILITRGGGSLEDLWAFNDERLARAIAAAQTPVVSAVGHETDFSLSDFVADVRAPTPSVAAELLVPDQRELVPRVRRAQARMTQLQQHALGNAMQRADRLALRLRAHSPQARLQLLHRRQEEAGRQLGARMTQVLERLQARVQRGHAQVQSHNPQRHLAGLQQRLRALHPQAAMQRRLQHDQLQLRSIARSLEAVNPLATVARGYAIVTRPADGSVVRSAAEVAAGERLRAQLADGSIEVRVEPGER.

This sequence belongs to the XseA family. Heterooligomer composed of large and small subunits.

It localises to the cytoplasm. The enzyme catalyses Exonucleolytic cleavage in either 5'- to 3'- or 3'- to 5'-direction to yield nucleoside 5'-phosphates.. Bidirectionally degrades single-stranded DNA into large acid-insoluble oligonucleotides, which are then degraded further into small acid-soluble oligonucleotides. The sequence is that of Exodeoxyribonuclease 7 large subunit from Xanthomonas oryzae pv. oryzae (strain MAFF 311018).